We begin with the raw amino-acid sequence, 313 residues long: Ankyrin repeat family A protein 2 (313 aa).

ANK repeat units lie at residues 148–180 (ANSLSVHQLAAQGEMLYLATRIEQENVINHTDE), 181–213 (EGFTPLMWAAAHGQIAVVEFLLQNGADPQLLGK), 214–246 (GRESALSLACSKGYTDIVKMLLDCGVDVNEYDW), 247–279 (NGGTPLLYAVHGNHVKCVKMLLESGADPTIETD), and 280–313 (SGYNSMDLAVALGYRSVQQVIESHLLKLLQNIKE).

As to quaternary structure, interacts (via ANK repeats) with CCDC8 (via PxLPxI/L motif); mediates the interaction with the 3M complex which is composed of CCDC8, CUL7 and OBSL1. Interacts (via ANK repeats) with HDAC4 (via PxLPxI/L motif). Interacts (via ANK repeats) with HDAC5 (via PxLPxI/L motif). Interacts (via ANK repeats) with LRP2/megalin (via PxLPxI/L motif). Interacts (via ANK repeats) with RFX7 (via PxLPxI/L motif). Interacts with AHRR. Interacts with NEK6.

It localises to the cytoplasm. Its subcellular location is the cytoskeleton. It is found in the membrane. In terms of biological role, may regulate the interaction between the 3M complex and the histone deacetylases HDAC4 and HDAC5. May also regulate LRP2/megalin. The sequence is that of Ankyrin repeat family A protein 2 (ANKRA2) from Homo sapiens (Human).